We begin with the raw amino-acid sequence, 510 residues long: Beta-glucosidase 12 (510 aa).

The signal sequence occupies residues 1–24; that stretch reads MAAAGAMPGGLLLTFLLLAVVASG. Residue glutamine 53 participates in a beta-D-glucoside binding. Residue asparagine 122 is glycosylated (N-linked (GlcNAc...) asparagine). Residues histidine 157 and 202–203 each bind a beta-D-glucoside; that span reads NE. The Proton donor role is filled by glutamate 203. Cystine bridges form between cysteine 208/cysteine 243 and cysteine 222/cysteine 230. Asparagine 229 carries an N-linked (GlcNAc...) asparagine glycan. Tyrosine 346 lines the a beta-D-glucoside pocket. Asparagine 361 and asparagine 371 each carry an N-linked (GlcNAc...) asparagine glycan. Position 417 (glutamate 417) interacts with a beta-D-glucoside. Catalysis depends on glutamate 417, which acts as the Nucleophile. The N-linked (GlcNAc...) asparagine glycan is linked to asparagine 425. A beta-D-glucoside-binding positions include tryptophan 466, 473-474, and phenylalanine 482; that span reads EW.

Belongs to the glycosyl hydrolase 1 family.

It localises to the secreted. The catalysed reaction is Hydrolysis of terminal, non-reducing beta-D-glucosyl residues with release of beta-D-glucose.. Its function is as follows. Hydrolyzes p-nitrophenyl beta-D-glucoside, p-nitrophenyl beta-D-galactoside, p-nitrophenyl beta-D-xyloside, p-nitrophenyl beta-D-fucoside, p-nitrophenyl beta-L-arabinoside, cello-oligosaccharides and laminaribiose. This chain is Beta-glucosidase 12, found in Oryza sativa subsp. japonica (Rice).